Reading from the N-terminus, the 1357-residue chain is DNA-directed RNA polymerase subunit beta (1357 aa).

Belongs to the RNA polymerase beta chain family. The RNAP catalytic core consists of 2 alpha, 1 beta, 1 beta' and 1 omega subunit. When a sigma factor is associated with the core the holoenzyme is formed, which can initiate transcription.

The catalysed reaction is RNA(n) + a ribonucleoside 5'-triphosphate = RNA(n+1) + diphosphate. Functionally, DNA-dependent RNA polymerase catalyzes the transcription of DNA into RNA using the four ribonucleoside triphosphates as substrates. The chain is DNA-directed RNA polymerase subunit beta from Pseudomonas putida (Arthrobacter siderocapsulatus).